Reading from the N-terminus, the 293-residue chain is Ribosomal RNA small subunit methyltransferase H (293 aa).

Residues 34–36 (GGH), aspartate 54, leucine 86, aspartate 101, and glutamine 108 contribute to the S-adenosyl-L-methionine site.

Belongs to the methyltransferase superfamily. RsmH family.

It localises to the cytoplasm. The enzyme catalyses cytidine(1402) in 16S rRNA + S-adenosyl-L-methionine = N(4)-methylcytidine(1402) in 16S rRNA + S-adenosyl-L-homocysteine + H(+). Its function is as follows. Specifically methylates the N4 position of cytidine in position 1402 (C1402) of 16S rRNA. This Elusimicrobium minutum (strain Pei191) protein is Ribosomal RNA small subunit methyltransferase H.